Here is a 265-residue protein sequence, read N- to C-terminus: 3-methyl-2-oxobutanoate hydroxymethyltransferase (265 aa).

The Mg(2+) site is built by Asp46 and Asp85. 3-methyl-2-oxobutanoate-binding positions include 46–47 (DS), Asp85, and Lys114. Residue Glu116 participates in Mg(2+) binding. Glu183 serves as the catalytic Proton acceptor.

This sequence belongs to the PanB family. As to quaternary structure, homodecamer; pentamer of dimers. Mg(2+) is required as a cofactor.

The protein localises to the cytoplasm. It catalyses the reaction 3-methyl-2-oxobutanoate + (6R)-5,10-methylene-5,6,7,8-tetrahydrofolate + H2O = 2-dehydropantoate + (6S)-5,6,7,8-tetrahydrofolate. The protein operates within cofactor biosynthesis; coenzyme A biosynthesis. Catalyzes the reversible reaction in which hydroxymethyl group from 5,10-methylenetetrahydrofolate is transferred onto alpha-ketoisovalerate to form ketopantoate. The chain is 3-methyl-2-oxobutanoate hydroxymethyltransferase from Pyrobaculum calidifontis (strain DSM 21063 / JCM 11548 / VA1).